Consider the following 209-residue polypeptide: Ion-translocating oxidoreductase complex subunit G (209 aa).

The Cytoplasmic portion of the chain corresponds to 1–8 (MLTAIRKN). Residues 9–29 (GLILAVFACVSTGLVALTYAL) traverse the membrane as a helical segment. Over 30-209 (TAEQIQQQEQ…HNQPNPCEGQ (180 aa)) the chain is Periplasmic. An FMN phosphoryl threonine modification is found at Thr-175.

The protein belongs to the RnfG family. As to quaternary structure, the complex is composed of six subunits: RnfA, RnfB, RnfC, RnfD, RnfE and RnfG. FMN serves as cofactor.

Its subcellular location is the cell inner membrane. Part of a membrane-bound complex that couples electron transfer with translocation of ions across the membrane. This Vibrio cholerae serotype O1 (strain ATCC 39541 / Classical Ogawa 395 / O395) protein is Ion-translocating oxidoreductase complex subunit G.